Reading from the N-terminus, the 234-residue chain is Chalcone--flavanone isomerase 2 (234 aa).

Positions 50, 115, and 192 each coordinate substrate.

This sequence belongs to the chalcone isomerase family.

The enzyme catalyses a chalcone = a flavanone.. It functions in the pathway secondary metabolite biosynthesis; flavonoid biosynthesis. Functionally, catalyzes the intramolecular cyclization of bicyclic chalcones into tricyclic (S)-flavanones. Responsible for the isomerization of 4,2',4',6'-tetrahydroxychalcone (also termed chalcone) into naringenin. The protein is Chalcone--flavanone isomerase 2 (CHI2) of Vitis vinifera (Grape).